The chain runs to 433 residues: Chaperone SurA (433 aa).

The first 20 residues, 1–20 (MKNWRTLIFGLMFSVSTAFA), serve as a signal peptide directing secretion. 2 consecutive PpiC domains span residues 171–272 (DTEL…KVND) and 282–382 (VTEV…QLLD).

The protein resides in the periplasm. The catalysed reaction is [protein]-peptidylproline (omega=180) = [protein]-peptidylproline (omega=0). Chaperone involved in the correct folding and assembly of outer membrane proteins. Recognizes specific patterns of aromatic residues and the orientation of their side chains, which are found more frequently in integral outer membrane proteins. May act in both early periplasmic and late outer membrane-associated steps of protein maturation. This Photorhabdus laumondii subsp. laumondii (strain DSM 15139 / CIP 105565 / TT01) (Photorhabdus luminescens subsp. laumondii) protein is Chaperone SurA.